Here is a 476-residue protein sequence, read N- to C-terminus: tRNA(Ile)-lysidine synthase (476 aa).

30-35 (SGGPDS) provides a ligand contact to ATP.

This sequence belongs to the tRNA(Ile)-lysidine synthase family.

The protein localises to the cytoplasm. It catalyses the reaction cytidine(34) in tRNA(Ile2) + L-lysine + ATP = lysidine(34) in tRNA(Ile2) + AMP + diphosphate + H(+). Its function is as follows. Ligates lysine onto the cytidine present at position 34 of the AUA codon-specific tRNA(Ile) that contains the anticodon CAU, in an ATP-dependent manner. Cytidine is converted to lysidine, thus changing the amino acid specificity of the tRNA from methionine to isoleucine. The sequence is that of tRNA(Ile)-lysidine synthase from Bacillus cereus (strain ZK / E33L).